Consider the following 365-residue polypeptide: 3-isopropylmalate dehydrogenase (365 aa).

78–89 (GPKWGTGKVRPE) contributes to the NAD(+) binding site. R96, R106, R135, and D224 together coordinate substrate. Mg(2+) is bound by residues D224, D249, and D253. Residue 289-301 (GSAPDISGKGIVN) coordinates NAD(+).

Belongs to the isocitrate and isopropylmalate dehydrogenases family. As to quaternary structure, homodimer. The cofactor is Mg(2+). Mn(2+) is required as a cofactor.

It localises to the cytoplasm. It carries out the reaction (2R,3S)-3-isopropylmalate + NAD(+) = 4-methyl-2-oxopentanoate + CO2 + NADH. Its pathway is amino-acid biosynthesis; L-leucine biosynthesis; L-leucine from 3-methyl-2-oxobutanoate: step 3/4. Its function is as follows. Catalyzes the oxidation of 3-carboxy-2-hydroxy-4-methylpentanoate (3-isopropylmalate) to 3-carboxy-4-methyl-2-oxopentanoate. The product decarboxylates to 4-methyl-2 oxopentanoate. The polypeptide is 3-isopropylmalate dehydrogenase (LEUC) (Zymoseptoria tritici (Speckled leaf blotch fungus)).